A 300-amino-acid polypeptide reads, in one-letter code: GTPase Era (300 aa).

The Era-type G domain maps to 6–173 (HSGFVAILGR…IESLVNTLPE (168 aa)). Positions 14-21 (GRPNVGKS) are G1. 14–21 (GRPNVGKS) serves as a coordination point for GTP. The segment at 40–44 (QTTRN) is G2. The interval 61–64 (DTPG) is G3. GTP-binding positions include 61–65 (DTPGI) and 123–126 (NKID). The G4 stretch occupies residues 123–126 (NKID). Residues 152 to 154 (ISA) are G5. In terms of domain architecture, KH type-2 spans 204–281 (TREEVPHSVA…YLELWVKVQP (78 aa)).

The protein belongs to the TRAFAC class TrmE-Era-EngA-EngB-Septin-like GTPase superfamily. Era GTPase family. Monomer.

The protein localises to the cytoplasm. The protein resides in the cell membrane. Functionally, an essential GTPase that binds both GDP and GTP, with rapid nucleotide exchange. Plays a role in 16S rRNA processing and 30S ribosomal subunit biogenesis and possibly also in cell cycle regulation and energy metabolism. In Ligilactobacillus salivarius (strain UCC118) (Lactobacillus salivarius), this protein is GTPase Era.